Reading from the N-terminus, the 494-residue chain is MNGITAWMEKYLVPVAAKIGSQKHLVALRDSFIGMLPATLAGALAAMISAIVTTFPSAIQQMMLGATAFSKLAPEKVWTLANTPIIGDLNNISALVNQGTLTVIGLIFAFSWGYNLARAYGVNDLAGGIVSLATLFAGLPNQMGKFTAALGTGKAGVAATDKLNGVLGDQGLAAWKPLFASAHLDAGAYFTVIIMGALAVIIYAKLMLADITIKMPESVPPAVAKAFLAIIPTIAALYIVGLIYYIIGKLTNDSVINLITHYIAEPFQILSQNIFSVLIVTLFVSVFWFFGLHGPNVLAPVLDGIWGPLGLNNQALYFQVHSQGIRDLIAKGAVDKAHAINGDYVNLWVRGSWDAFAWFGGSGGTITLVIAIILFSKRKDYKIVGRLGLAPGIFNINEPVLFGLPVVLNAIFFIPFAVAPLISVIIAYTATALHLVDPVVNAVPWVTPPIMNAFMATGFDWRAIVLTIINLIITFVIWVPFVIAANKLEETELD.

In terms of domain architecture, PTS EIIC type-3 spans 8-481 (MEKYLVPVAA…IITFVIWVPF (474 aa)). Transmembrane regions (helical) follow at residues 32 to 52 (FIGMLPATLAGALAAMISAIV), 92 to 112 (ISALVNQGTLTVIGLIFAFSW), 119 to 139 (AYGVNDLAGGIVSLATLFAGL), 188 to 208 (AYFTVIIMGALAVIIYAKLML), 227 to 247 (FLAIIPTIAALYIVGLIYYII), 274 to 294 (IFSVLIVTLFVSVFWFFGLHG), 355 to 375 (AFAWFGGSGGTITLVIAIILF), 406 to 426 (VVLNAIFFIPFAVAPLISVII), and 463 to 483 (AIVLTIINLIITFVIWVPFVI).

Its subcellular location is the cell membrane. Its function is as follows. The phosphoenolpyruvate-dependent sugar phosphotransferase system (PTS), a major carbohydrate active transport system, catalyzes the phosphorylation of incoming sugar substrates concomitant with their translocation across the cell membrane. Involved in cellobiose transport with PtcA and PtcB. This system can also transport lactose. This chain is PTS system cellobiose-specific EIIC component, found in Lactococcus lactis subsp. lactis (strain IL1403) (Streptococcus lactis).